We begin with the raw amino-acid sequence, 308 residues long: Testis-specific Y-encoded protein 8 (308 aa).

The protein belongs to the nucleosome assembly protein (NAP) family.

The protein localises to the cytoplasm. It is found in the nucleus. May be involved in sperm differentiation and proliferation. This Homo sapiens (Human) protein is Testis-specific Y-encoded protein 8 (TSPY8).